Here is a 294-residue protein sequence, read N- to C-terminus: ATP synthase gamma chain (294 aa).

Belongs to the ATPase gamma chain family. F-type ATPases have 2 components, CF(1) - the catalytic core - and CF(0) - the membrane proton channel. CF(1) has five subunits: alpha(3), beta(3), gamma(1), delta(1), epsilon(1). CF(0) has three main subunits: a, b and c.

Its subcellular location is the cell inner membrane. Its function is as follows. Produces ATP from ADP in the presence of a proton gradient across the membrane. The gamma chain is believed to be important in regulating ATPase activity and the flow of protons through the CF(0) complex. The protein is ATP synthase gamma chain of Rhizobium etli (strain CIAT 652).